A 339-amino-acid chain; its full sequence is MRVYYDRDADLNLIKGKKVAIIGYGSQGRAHALNLKDSGAKEIAIGLKAGSATAKKVEADGLKVMSVADAAKWADLMMMATPDELQADIYKNEIAPNIRDGAAIAFAHGLNVHFGLIEPKSTVDVVMIAPKGPGHTVRGEYQKGGGVPCLVAVNQDASGNALDLALSYACGVGGGRSGIIETNFREECETDLFGEQVVLCGGLVELIRAGFETLVEAGYAPEMAYFECLHEVKLIVDLIYEGGIANMNYSISNTAEWGEYVSGPRIITAETKAEMKRVLKDIQTGKFTSEWMQEYRAGLSRFKGIRRMNDSHQIEEVGAKLRAMMPWISKNKLVDKAKN.

The KARI N-terminal Rossmann domain occupies 1–182 (MRVYYDRDAD…GGGRSGIIET (182 aa)). Residues 24–27 (YGSQ), lysine 48, serine 51, threonine 53, and 83–86 (DELQ) contribute to the NADP(+) site. Histidine 108 is a catalytic residue. Glycine 134 lines the NADP(+) pocket. Positions 183–328 (NFREECETDL…AKLRAMMPWI (146 aa)) constitute a KARI C-terminal knotted domain. Aspartate 191, glutamate 195, glutamate 227, and glutamate 231 together coordinate Mg(2+). Serine 252 is a substrate binding site.

It belongs to the ketol-acid reductoisomerase family. Mg(2+) is required as a cofactor.

The catalysed reaction is (2R)-2,3-dihydroxy-3-methylbutanoate + NADP(+) = (2S)-2-acetolactate + NADPH + H(+). It catalyses the reaction (2R,3R)-2,3-dihydroxy-3-methylpentanoate + NADP(+) = (S)-2-ethyl-2-hydroxy-3-oxobutanoate + NADPH + H(+). Its pathway is amino-acid biosynthesis; L-isoleucine biosynthesis; L-isoleucine from 2-oxobutanoate: step 2/4. It functions in the pathway amino-acid biosynthesis; L-valine biosynthesis; L-valine from pyruvate: step 2/4. Involved in the biosynthesis of branched-chain amino acids (BCAA). Catalyzes an alkyl-migration followed by a ketol-acid reduction of (S)-2-acetolactate (S2AL) to yield (R)-2,3-dihydroxy-isovalerate. In the isomerase reaction, S2AL is rearranged via a Mg-dependent methyl migration to produce 3-hydroxy-3-methyl-2-ketobutyrate (HMKB). In the reductase reaction, this 2-ketoacid undergoes a metal-dependent reduction by NADPH to yield (R)-2,3-dihydroxy-isovalerate. This is Ketol-acid reductoisomerase (NADP(+)) from Mesorhizobium japonicum (strain LMG 29417 / CECT 9101 / MAFF 303099) (Mesorhizobium loti (strain MAFF 303099)).